A 341-amino-acid chain; its full sequence is S-adenosylmethionine:tRNA ribosyltransferase-isomerase (341 aa).

This sequence belongs to the QueA family. In terms of assembly, monomer.

It localises to the cytoplasm. The catalysed reaction is 7-aminomethyl-7-carbaguanosine(34) in tRNA + S-adenosyl-L-methionine = epoxyqueuosine(34) in tRNA + adenine + L-methionine + 2 H(+). It functions in the pathway tRNA modification; tRNA-queuosine biosynthesis. Functionally, transfers and isomerizes the ribose moiety from AdoMet to the 7-aminomethyl group of 7-deazaguanine (preQ1-tRNA) to give epoxyqueuosine (oQ-tRNA). The sequence is that of S-adenosylmethionine:tRNA ribosyltransferase-isomerase from Staphylococcus haemolyticus (strain JCSC1435).